Consider the following 1170-residue polypeptide: WD repeat-containing protein 35 (1170 aa).

WD repeat units follow at residues Pro-12–Lys-51, Gly-69–Glu-108, Arg-113–Lys-152, Leu-154–Met-193, and Gly-491–Lys-528.

Component of the IFT complex A (IFT-A) complex. IFT-A complex is divided into a core subcomplex composed of IFT122:IFT140:WDR19 which is associated with TULP3 and a peripheral subcomplex composed of IFT43:WDR35:TTC21B. Interacts directy with IFT122, ITF43 and TTC21B. Interacts with IFT43. Interacts with CFAP61. Expressed at high levels in testis and at lower levels in the brain (at protein level). Also present in other tissues, including heart, uterus, spinal cord, ovary, liver, kidney, lung, pancreas and stomach.

It localises to the cytoplasm. The protein localises to the cytoskeleton. It is found in the microtubule organizing center. The protein resides in the centrosome. Its subcellular location is the cilium axoneme. It localises to the cilium basal body. Its function is as follows. As a component of the IFT complex A (IFT-A), a complex required for retrograde ciliary transport and entry into cilia of G protein-coupled receptors (GPCRs), it is involved in ciliogenesis and ciliary protein trafficking. May promote CASP3 activation and TNF-stimulated apoptosis. This chain is WD repeat-containing protein 35 (Wdr35), found in Rattus norvegicus (Rat).